A 387-amino-acid polypeptide reads, in one-letter code: NADPH-dependent aldehyde reductase YqhD (387 aa).

12 residues coordinate NADP(+): glycine 38, serine 40, asparagine 68, glycine 95, serine 96, aspartate 99, threonine 138, asparagine 147, glycine 149, lysine 160, tyrosine 179, and threonine 182. 4 residues coordinate Zn(2+): aspartate 194, histidine 198, histidine 267, and histidine 281.

It belongs to the iron-containing alcohol dehydrogenase family. As to quaternary structure, homodimer. The crystals contain two dimers in the asymmetric unit. Requires Zn(2+) as cofactor.

It carries out the reaction a primary alcohol + NADP(+) = an aldehyde + NADPH + H(+). The enzyme catalyses butan-1-ol + NADP(+) = butanal + NADPH + H(+). The catalysed reaction is 1-propanol + NADP(+) = propanal + NADPH + H(+). It catalyses the reaction allyl alcohol + NADP(+) = acrolein + NADPH + H(+). Exhibits NADPH-dependent reductase activity for a broad range of short-chain aldehydes. Shows highest catalytic efficiency toward butanal, propanal and the highly toxic aldehydes acrolein and malondialdehyde (MDA), which are produced mainly during lipid peroxidation. Mediates resistance to reactive oxygen species (ROS) elicitors, such as paraquat and potassium tellurite, probably by protecting the cell against the toxic effects of reactive aldehydes derived from membrane lipid peroxidation. Also acts, with lower efficiency, on acetaldehyde, glyceraldehyde, glycolaldehyde, methylglyoxal, glyoxal and hydroxyacetone. Could be involved in glyoxal metabolism, by catalyzing the reduction of glyoxal to glycolaldehyde, and further to 1,2-ethandiol. Catalyzes the reduction of isobutyraldehyde (2-methylpropanal) to isobutanol, and probably contributes to the production of isobutanol. Can probably catalyze the reduction of glutaraldehyde, a widely used biocide, to 1,5-pentanediol, which is non-toxic. Overexpression of YqhD protects the cells against glutaraldehyde toxicity. Can catalyze in vitro the NADPH-dependent reduction of furfural, a natural product of lignocellulosic decomposition, to the less toxic product, furfuryl alcohol. However, it is unlikely that furfural is a physiological substrate. Functionally, in contrast, Sulzenbacher et al. detected significant activities only in the presence of alcohol and NADP(+). They reported in vitro NADP(+)-dependent alcohol dehydrogenase (ADH) activity towards various alcohols, with a preference for alcohols longer than C(3), but the affinity for the substrates is poor, suggesting that these compounds are not the physiological substrates. Perez et al. did not detect dehydrogenase activity with short and medium chain alcohols such as methanol, ethanol, propanol, butanol or isopropanol. The polypeptide is NADPH-dependent aldehyde reductase YqhD (yqhD) (Escherichia coli (strain K12)).